The primary structure comprises 312 residues: Pantothenate kinase (312 aa).

Residue 97–104 participates in ATP binding; the sequence is GSVAVGKS.

The protein belongs to the prokaryotic pantothenate kinase family.

Its subcellular location is the cytoplasm. It catalyses the reaction (R)-pantothenate + ATP = (R)-4'-phosphopantothenate + ADP + H(+). Its pathway is cofactor biosynthesis; coenzyme A biosynthesis; CoA from (R)-pantothenate: step 1/5. This is Pantothenate kinase from Mycolicibacterium vanbaalenii (strain DSM 7251 / JCM 13017 / BCRC 16820 / KCTC 9966 / NRRL B-24157 / PYR-1) (Mycobacterium vanbaalenii).